We begin with the raw amino-acid sequence, 54 residues long: Ovomucoid (54 aa).

The Kazal-like domain occupies 4 to 54 (VDCSEYPKPACTLEHRPLCGSDNKTYGNKCNFCNAVVESNGTLTLSHFGKC). Disulfide bonds link Cys-6/Cys-36, Cys-14/Cys-33, and Cys-22/Cys-54. Residue Asn-43 is glycosylated (N-linked (GlcNAc...) asparagine).

It is found in the secreted. The polypeptide is Ovomucoid (Pavo muticus (Green peafowl)).